Here is a 395-residue protein sequence, read N- to C-terminus: ATP phosphoribosyltransferase regulatory subunit (395 aa).

Belongs to the class-II aminoacyl-tRNA synthetase family. HisZ subfamily. Heteromultimer composed of HisG and HisZ subunits.

The protein localises to the cytoplasm. Its pathway is amino-acid biosynthesis; L-histidine biosynthesis; L-histidine from 5-phospho-alpha-D-ribose 1-diphosphate: step 1/9. In terms of biological role, required for the first step of histidine biosynthesis. May allow the feedback regulation of ATP phosphoribosyltransferase activity by histidine. This chain is ATP phosphoribosyltransferase regulatory subunit, found in Ectopseudomonas mendocina (strain ymp) (Pseudomonas mendocina).